The sequence spans 301 residues: Methionyl-tRNA formyltransferase (301 aa).

109-112 (SLLP) contributes to the (6S)-5,6,7,8-tetrahydrofolate binding site.

Belongs to the Fmt family.

The enzyme catalyses L-methionyl-tRNA(fMet) + (6R)-10-formyltetrahydrofolate = N-formyl-L-methionyl-tRNA(fMet) + (6S)-5,6,7,8-tetrahydrofolate + H(+). Its function is as follows. Attaches a formyl group to the free amino group of methionyl-tRNA(fMet). The formyl group appears to play a dual role in the initiator identity of N-formylmethionyl-tRNA by promoting its recognition by IF2 and preventing the misappropriation of this tRNA by the elongation apparatus. The protein is Methionyl-tRNA formyltransferase of Jannaschia sp. (strain CCS1).